Here is a 314-residue protein sequence, read N- to C-terminus: Homoserine O-succinyltransferase (314 aa).

Cysteine 142 serves as the catalytic Acyl-thioester intermediate. Substrate is bound by residues lysine 163 and serine 192. Residue histidine 235 is the Proton acceptor of the active site. The active site involves glutamate 237. Residue arginine 249 participates in substrate binding.

It belongs to the MetA family.

The protein resides in the cytoplasm. The catalysed reaction is L-homoserine + succinyl-CoA = O-succinyl-L-homoserine + CoA. It functions in the pathway amino-acid biosynthesis; L-methionine biosynthesis via de novo pathway; O-succinyl-L-homoserine from L-homoserine: step 1/1. Its function is as follows. Transfers a succinyl group from succinyl-CoA to L-homoserine, forming succinyl-L-homoserine. The protein is Homoserine O-succinyltransferase of Shewanella woodyi (strain ATCC 51908 / MS32).